We begin with the raw amino-acid sequence, 500 residues long: NAD(P)H-quinone oxidoreductase chain 4, chloroplastic (500 aa).

15 consecutive transmembrane segments (helical) span residues 4–24, 37–57, 87–107, 113–130, 134–154, 167–187, 207–227, 242–262, 272–292, 305–325, 330–350, 364–384, 386–406, 417–437, and 463–483; these read FPWL…LFFF, ICIC…HFEL, IGPI…AWPV, LFYF…GSFS, LLLF…LLSM, FILY…GIGL, IALE…KSPI, HYST…YGLV, AHSI…IYAA, IAYS…SISD, GAIL…FLAG, MGGL…LSMA, LALP…GIIT, VITL…LSML, and FVAI…DFVF.

This sequence belongs to the complex I subunit 4 family.

Its subcellular location is the plastid. The protein localises to the chloroplast thylakoid membrane. It catalyses the reaction a plastoquinone + NADH + (n+1) H(+)(in) = a plastoquinol + NAD(+) + n H(+)(out). The enzyme catalyses a plastoquinone + NADPH + (n+1) H(+)(in) = a plastoquinol + NADP(+) + n H(+)(out). This Cucumis sativus (Cucumber) protein is NAD(P)H-quinone oxidoreductase chain 4, chloroplastic.